Reading from the N-terminus, the 147-residue chain is Small ribosomal subunit protein eS10B (147 aa).

The interval Thr90–Ala147 is disordered. Over residues Gly103–Gly127 the composition is skewed to basic and acidic residues.

Belongs to the eukaryotic ribosomal protein eS10 family. As to quaternary structure, component of the small ribosomal subunit (SSU). Mature yeast ribosomes consist of a small (40S) and a large (60S) subunit. The 40S small subunit contains 1 molecule of ribosomal RNA (18S rRNA) and at least 33 different proteins. The large 60S subunit contains 3 rRNA molecules (25S, 5.8S and 5S rRNA) and at least 46 different proteins. eS10 interacts with GCN1 (via middle region); this interaction is direct and promotes GCN2 kinase activity.

The protein localises to the cytoplasm. Functionally, component of the ribosome, a large ribonucleoprotein complex responsible for the synthesis of proteins in the cell. The small ribosomal subunit (SSU) binds messenger RNAs (mRNAs) and translates the encoded message by selecting cognate aminoacyl-transfer RNA (tRNA) molecules. The large subunit (LSU) contains the ribosomal catalytic site termed the peptidyl transferase center (PTC), which catalyzes the formation of peptide bonds, thereby polymerizing the amino acids delivered by tRNAs into a polypeptide chain. The nascent polypeptides leave the ribosome through a tunnel in the LSU and interact with protein factors that function in enzymatic processing, targeting, and the membrane insertion of nascent chains at the exit of the ribosomal tunnel. eS10 plays a role as a positive regulator of the GCN2 kinase activity by stimulating GCN1-mediated GCN2 activation. The sequence is that of Small ribosomal subunit protein eS10B (rps1002) from Schizosaccharomyces pombe (strain 972 / ATCC 24843) (Fission yeast).